The sequence spans 777 residues: Ribosome biogenesis protein ERB1 (777 aa).

The interval 1 to 122 (MAPTAPAKKR…RPNYRVVEDA (122 aa)) is disordered. Residues 36-67 (SEDDSDFVASGDEDEEDEDEDEDEDKDEDDEH) are compositionally biased toward acidic residues. WD repeat units follow at residues 430 to 469 (GHEG…QVWA), 473 to 513 (SSDE…PEVE), 562 to 604 (TVRS…SQIP), 606 to 645 (RKLS…LVKV), 648 to 687 (PGAR…RPYK), 691 to 731 (FHPQ…DLME), and 747 to 777 (VDSL…RLWM).

Belongs to the WD repeat BOP1/ERB1 family. In terms of assembly, component of the NOP7 complex, composed of ERB1, NOP7 and YTM1. The complex is held together by ERB1, which interacts with NOP7 via its N-terminal domain and with YTM1 via a high-affinity interaction between the seven-bladed beta-propeller domains of the 2 proteins. The NOP7 complex associates with the 66S pre-ribosome.

The protein localises to the nucleus. It localises to the nucleolus. The protein resides in the nucleoplasm. Its function is as follows. Component of the NOP7 complex, which is required for maturation of the 25S and 5.8S ribosomal RNAs and formation of the 60S ribosome. In Pyricularia oryzae (strain 70-15 / ATCC MYA-4617 / FGSC 8958) (Rice blast fungus), this protein is Ribosome biogenesis protein ERB1.